Reading from the N-terminus, the 402-residue chain is Sorting nexin 1 (402 aa).

A compositionally biased stretch (polar residues) spans 1–10 (MESTEQPRNI). The disordered stretch occupies residues 1–25 (MESTEQPRNISGSMQSPRSPSSHPY). Residues 11–24 (SGSMQSPRSPSSHP) are compositionally biased toward low complexity. Residue Ser-16 is modified to Phosphoserine. The PX domain maps to 24–143 (PYLSVSVTDP…TFLQADEETM (120 aa)). A 1,2-diacyl-sn-glycero-3-phospho-(1D-myo-inositol-3-phosphate) is bound by residues Arg-67, Lys-93, and Arg-109. Positions 160–402 (LMQMFRDVQS…LPKLEASYSV (243 aa)) constitute a BAR domain.

It belongs to the sorting nexin family. As to quaternary structure, homodimer. Heterodimer with SNX2A or SNX2B. Component of the retromer complex which consists of VPS29 (MAG1), VPS26 (VPS26A or VPS26B), VPS35 (VPS35A or VPS35B or VPS35C), VPS5/17 (SNX1 or SNX2A or SNX2B). Interacts with BLOS1 and BLOS2. As to expression, ubiquitously expressed.

The protein resides in the cytoplasm. The protein localises to the endosome membrane. It localises to the prevacuolar compartment membrane. Its subcellular location is the golgi apparatus. It is found in the trans-Golgi network membrane. Its function is as follows. Plays a role in vesicular protein sorting. Acts at the crossroads between the secretory and endocytic pathways. Is involved in the endosome to vacuole protein transport via its interaction with the BLOS1/2 proteins and, as component of the membrane-associated retromer complex, is also involved in endosome-to-Golgi retrograde transport. Required for the auxin-carrier protein PIN2 sorting to the lytic vacuolar pathway and the trafficking of several plasma membrane proteins. Also involved in the efficient sorting of seed storage protein globulin 12S. This Arabidopsis thaliana (Mouse-ear cress) protein is Sorting nexin 1 (SNX1).